Reading from the N-terminus, the 483-residue chain is Regulatory protein ViaA (483 aa).

The protein belongs to the ViaA family. In terms of assembly, homodimer. Interacts with RavA.

Its subcellular location is the cytoplasm. Its function is as follows. Component of the RavA-ViaA chaperone complex, which may act on the membrane to optimize the function of some of the respiratory chains. ViaA stimulates the ATPase activity of RavA. This Escherichia coli O17:K52:H18 (strain UMN026 / ExPEC) protein is Regulatory protein ViaA.